Consider the following 448-residue polypeptide: Probable glycine dehydrogenase (decarboxylating) subunit 1 (448 aa).

Belongs to the GcvP family. N-terminal subunit subfamily. The glycine cleavage system is composed of four proteins: P, T, L and H. In this organism, the P 'protein' is a heterodimer of two subunits.

The enzyme catalyses N(6)-[(R)-lipoyl]-L-lysyl-[glycine-cleavage complex H protein] + glycine + H(+) = N(6)-[(R)-S(8)-aminomethyldihydrolipoyl]-L-lysyl-[glycine-cleavage complex H protein] + CO2. Functionally, the glycine cleavage system catalyzes the degradation of glycine. The P protein binds the alpha-amino group of glycine through its pyridoxal phosphate cofactor; CO(2) is released and the remaining methylamine moiety is then transferred to the lipoamide cofactor of the H protein. In Listeria innocua serovar 6a (strain ATCC BAA-680 / CLIP 11262), this protein is Probable glycine dehydrogenase (decarboxylating) subunit 1.